The following is a 102-amino-acid chain: MPKQKIRIRLKAFDHAILDQSAQKIVETAKRTGAEVSGPIPLPTEKDIITILRAPHKYKDSREQFEIRTHKRLIDILNPTPKTVDALMRLDLPSGVDIEIKL.

Belongs to the universal ribosomal protein uS10 family. In terms of assembly, part of the 30S ribosomal subunit.

Involved in the binding of tRNA to the ribosomes. This Thermoanaerobacter pseudethanolicus (strain ATCC 33223 / 39E) (Clostridium thermohydrosulfuricum) protein is Small ribosomal subunit protein uS10.